Consider the following 343-residue polypeptide: MSNYQFTKPAGPFRLFELAKISGATLYEGKGETFTVSGLAKLSEATSNDLVMLHQKKYVKELKHTAARVCIIGPDYVKYAPDSMYLLVHPNPYKAFALIAQAFYPSEKPPGFIATSAMIESSAIIGVDCFIAHGAYIGNQVKIGNRCKIGVNTYIGDTVTIGDDCLIEDNVSIRHAVIGNNVVIYSGARIGQDGFGFASDANGHYKIPHAGGVIIGNDVEIGANTCIDRGSLDNTVIEDWCRLDNLVQIGHNVKIGKGSVLVAQVGIAGSTELGEHVTLAGQVGVIGHLKIGKGATVLASAKVYKNVKSGDRVGGHPAVSISDWQKQIRFLKTAIKSKKSPKS.

His-251 (proton acceptor) is an active-site residue.

The protein belongs to the transferase hexapeptide repeat family. LpxD subfamily. As to quaternary structure, homotrimer.

It carries out the reaction a UDP-3-O-[(3R)-3-hydroxyacyl]-alpha-D-glucosamine + a (3R)-hydroxyacyl-[ACP] = a UDP-2-N,3-O-bis[(3R)-3-hydroxyacyl]-alpha-D-glucosamine + holo-[ACP] + H(+). Its pathway is bacterial outer membrane biogenesis; LPS lipid A biosynthesis. Catalyzes the N-acylation of UDP-3-O-acylglucosamine using 3-hydroxyacyl-ACP as the acyl donor. Is involved in the biosynthesis of lipid A, a phosphorylated glycolipid that anchors the lipopolysaccharide to the outer membrane of the cell. This chain is UDP-3-O-acylglucosamine N-acyltransferase 2, found in Legionella pneumophila subsp. pneumophila (strain Philadelphia 1 / ATCC 33152 / DSM 7513).